A 387-amino-acid polypeptide reads, in one-letter code: Adaptive-response sensory kinase SasA (387 aa).

The tract at residues 1-97 is interacts with KaiC; sequence MGESLSPQAL…TDQLANQLPQ (97 aa). The Histidine kinase domain occupies 158 to 382; it reads LVAHDLRNPL…TFHFTMPVYR (225 aa). At His161 the chain carries Phosphohistidine; by autocatalysis.

Homooligomerizes. Part of the circadian clock (KaiA, KaiB, KaiC, CikA, RpaA, SasA), the composition of which varies during the circadian cycle. Binds to the CI domain of KaiC; KaiB(fs) and SasA compete for the binding site. Binds preferentially to doubly phosphorylated KaiC. Interacts with LdpA. Post-translationally, autophosphorylates in vitro.

It catalyses the reaction ATP + protein L-histidine = ADP + protein N-phospho-L-histidine.. Its function is as follows. Member of the two-component regulatory system SasA/RpaA involved in genome-wide circadian gene expression. One of three clock output pathways. Participates in the KaiABC clock protein complex, which constitutes the main circadian regulator in cyanobacteria, via its interaction with KaiC. Required for robustness of the circadian rhythm of gene expression and involved in clock output. KaiC enhances the autophosphorylation activity of SasA, which then transfers its phosphate group to RpaA to activate it. Phosphotransfer is maximal when KaiC phosphorylation is active during the circadian cycle; this two-component system is activated by fully phosphorylated KaiC. A very robust clock is reconstituted with KaiA, KaiB, KaiC, SasA, CikA and RpaA; output is measured by transcription from an appropriate reporter. In addition to its output function, recruits fold-shifted KaiB (KaiB(fs)) to KaiC to cooperatively form the KaiB(6):KaiC(6) complex (independent of SasA kinase activity); at physiological concentrations increases their association. At higher concentrations SasA and KaiB(fs) compete to bind to KaiC. Mutations that decrease cooperativity nearly phenocopy a deletion mutation. Autophosphorylation and phosphotransfer activities are not essential for clock rhythms in continuous light, but they are essential for adaptation to light/dark cycles. The chain is Adaptive-response sensory kinase SasA from Synechococcus elongatus (strain ATCC 33912 / PCC 7942 / FACHB-805) (Anacystis nidulans R2).